Reading from the N-terminus, the 79-residue chain is Toxin 3FTx-Oxy5 (79 aa).

The N-terminal stretch at 1 to 23 (MKTLLLTLVVMTIVCLDLGYTLT) is a signal peptide. Intrachain disulfides connect cysteine 24–cysteine 41, cysteine 34–cysteine 59, cysteine 63–cysteine 71, and cysteine 72–cysteine 77.

This sequence belongs to the three-finger toxin family. Short-chain subfamily. As to expression, expressed by the venom gland.

Its subcellular location is the secreted. The chain is Toxin 3FTx-Oxy5 from Oxyuranus microlepidotus (Inland taipan).